The chain runs to 376 residues: Putative 12-oxophytodienoate reductase 2 (376 aa).

FMN-binding positions include 31–33 (PLT), alanine 64, and glutamine 106. Substrate is bound at residue 178-181 (HGAH). Tyrosine 183 functions as the Proton donor in the catalytic mechanism. FMN contacts are provided by residues arginine 230, glycine 301, and 322-323 (GR).

It belongs to the NADH:flavin oxidoreductase/NADH oxidase family. Requires FMN as cofactor.

Its function is as follows. Putative oxophytodienoate reductase that may be involved in the biosynthesis or metabolism of oxylipin signaling molecules. This is Putative 12-oxophytodienoate reductase 2 (OPR2) from Oryza sativa subsp. japonica (Rice).